The chain runs to 284 residues: Lipoyl synthase (284 aa).

[4Fe-4S] cluster contacts are provided by Cys-34, Cys-39, Cys-45, Cys-60, Cys-64, Cys-67, and Ser-272. Positions 46–261 constitute a Radical SAM core domain; that stretch reads FARRTATFMI…EEIGYKLGFK (216 aa).

Belongs to the radical SAM superfamily. Lipoyl synthase family. Requires [4Fe-4S] cluster as cofactor.

The protein localises to the cytoplasm. The enzyme catalyses [[Fe-S] cluster scaffold protein carrying a second [4Fe-4S](2+) cluster] + N(6)-octanoyl-L-lysyl-[protein] + 2 oxidized [2Fe-2S]-[ferredoxin] + 2 S-adenosyl-L-methionine + 4 H(+) = [[Fe-S] cluster scaffold protein] + N(6)-[(R)-dihydrolipoyl]-L-lysyl-[protein] + 4 Fe(3+) + 2 hydrogen sulfide + 2 5'-deoxyadenosine + 2 L-methionine + 2 reduced [2Fe-2S]-[ferredoxin]. Its pathway is protein modification; protein lipoylation via endogenous pathway; protein N(6)-(lipoyl)lysine from octanoyl-[acyl-carrier-protein]: step 2/2. Catalyzes the radical-mediated insertion of two sulfur atoms into the C-6 and C-8 positions of the octanoyl moiety bound to the lipoyl domains of lipoate-dependent enzymes, thereby converting the octanoylated domains into lipoylated derivatives. The protein is Lipoyl synthase of Caldanaerobacter subterraneus subsp. tengcongensis (strain DSM 15242 / JCM 11007 / NBRC 100824 / MB4) (Thermoanaerobacter tengcongensis).